Reading from the N-terminus, the 971-residue chain is Protein cwh43 (971 aa).

A PGAP2-like region spans residues Met1–Glu242. Transmembrane regions (helical) follow at residues Val15–Leu35, Val71–Phe91, Val101–Val121, Trp129–Ser149, Ile161–Ile181, Ile188–Leu208, Val286–Phe306, Ile313–Leu333, Lys336–Tyr356, Phe366–Ile386, Ile397–Asn417, Gln432–Gln452, Ile467–Leu487, Tyr509–Leu529, Ser532–Ile552, Gly555–Ala575, Val588–Ala608, Thr622–Gly642, and Leu673–Pro693. The segment at Lys243–Asp971 is PGAP2IP-like. The active site involves His826.

The protein in the N-terminal section; belongs to the PGAP2 family. This sequence in the C-terminal section; belongs to the PGAP2IP family.

It is found in the cell membrane. The protein resides in the endoplasmic reticulum membrane. Its function is as follows. Involved in the maintenance of cell wall integrity. Required for the replacement of the diacylglycerol moiety by ceramides during GPI-anchor maturation. The sequence is that of Protein cwh43 (cwh43) from Schizosaccharomyces pombe (strain 972 / ATCC 24843) (Fission yeast).